The following is a 233-amino-acid chain: 6-carboxyhexanoate--CoA ligase (233 aa).

The protein belongs to the BioW family. In terms of assembly, homodimer. The cofactor is Mg(2+).

It carries out the reaction heptanedioate + ATP + CoA = 6-carboxyhexanoyl-CoA + AMP + diphosphate. The protein operates within metabolic intermediate metabolism; pimeloyl-CoA biosynthesis; pimeloyl-CoA from pimelate: step 1/1. In terms of biological role, catalyzes the transformation of pimelate into pimeloyl-CoA with concomitant hydrolysis of ATP to AMP. This is 6-carboxyhexanoate--CoA ligase from Methanocaldococcus sp. (strain FS406-22).